The chain runs to 1698 residues: Protein 4.1 homolog (1698 aa).

Residues 1–31 (MPAEIKPSAPAEPETPTKSKPKSSSSSHGKP) form a disordered region. The segment covering 12-27 (EPETPTKSKPKSSSSS) has biased composition (low complexity). The region spanning 32–314 (ALARVTLLDG…EHHTFFRLMT (283 aa)) is the FERM domain. A hydrophilic region spans residues 317-434 (PVSKSKMFPV…KEEKERKERE (118 aa)). Disordered regions lie at residues 335–361 (GRTQ…SGAR) and 374–710 (EKEK…SDPT). Positions 374-448 (EKEKVARKSS…EEKKKAEKAA (75 aa)) are enriched in basic and acidic residues. A compositionally biased stretch (low complexity) spans 449–461 (KAALAAGAAAGAA). Phosphoserine is present on residues Ser-471, Ser-474, and Ser-478. The span at 499 to 514 (KDGKDKSGKDKDKEVG) shows a compositional bias: basic and acidic residues. A compositionally biased stretch (polar residues) spans 562–571 (DGNTSPTRKS). Residue Ser-566 is modified to Phosphoserine. Over residues 579–589 (YDQDPNSRKSG) the composition is skewed to basic and acidic residues. The segment covering 594–603 (EQLSPTSQQK) has biased composition (polar residues). A compositionally biased stretch (basic and acidic residues) spans 618-627 (ALKETAEKLK). Residues Ser-659 and Ser-687 each carry the phosphoserine modification. A compositionally biased stretch (polar residues) spans 684–696 (RSYSPTKGPQGYS). Phosphothreonine is present on Thr-689. Phosphoserine is present on residues Ser-697, Ser-1398, Ser-1401, and Ser-1402. The segment at 1286–1698 (GEIVQVDPND…EKIEIQQQTQ (413 aa)) is C-terminal (CTD). Phosphothreonine is present on Thr-1407. Residues 1509 to 1532 (LGKNAKTEQLEEKTVATTRTHDPN) show a composition bias toward basic and acidic residues. Positions 1509 to 1599 (LGKNAKTEQL…SPLFTTSATT (91 aa)) are disordered. Over residues 1533–1554 (KQQQRVVTQEVKTTATVTSGDQ) the composition is skewed to polar residues. Residues 1561–1571 (VSSTSSGDSGT) show a composition bias toward low complexity. Residues 1584-1599 (RTDNQKSPLFTTSATT) are compositionally biased toward polar residues. A Phosphoserine modification is found at Ser-1590.

As to expression, at onset of germ band retraction, expression is seen in epidermis, hindgut and foregut. During retraction, expression extends to tracheal branches and salivary glands.

It localises to the cell junction. The protein resides in the septate junction. In terms of biological role, an integral component of the septate junction. May play a role in cell-cell interactions that are necessary for proper development. Vital for embryonic development. This chain is Protein 4.1 homolog (cora), found in Drosophila melanogaster (Fruit fly).